The primary structure comprises 205 residues: Thiamine-phosphate synthase (205 aa).

Residues 37-41 and Asn69 contribute to the 4-amino-2-methyl-5-(diphosphooxymethyl)pyrimidine site; that span reads QVREK. 2 residues coordinate Mg(2+): Asp70 and Asp89. Residue Ser108 coordinates 4-amino-2-methyl-5-(diphosphooxymethyl)pyrimidine. 134–136 lines the 2-[(2R,5Z)-2-carboxy-4-methylthiazol-5(2H)-ylidene]ethyl phosphate pocket; it reads TGS. Position 137 (Lys137) interacts with 4-amino-2-methyl-5-(diphosphooxymethyl)pyrimidine. 2-[(2R,5Z)-2-carboxy-4-methylthiazol-5(2H)-ylidene]ethyl phosphate is bound by residues Gly165 and 185–186; that span reads IS.

Belongs to the thiamine-phosphate synthase family. Mg(2+) is required as a cofactor.

The catalysed reaction is 2-[(2R,5Z)-2-carboxy-4-methylthiazol-5(2H)-ylidene]ethyl phosphate + 4-amino-2-methyl-5-(diphosphooxymethyl)pyrimidine + 2 H(+) = thiamine phosphate + CO2 + diphosphate. It catalyses the reaction 2-(2-carboxy-4-methylthiazol-5-yl)ethyl phosphate + 4-amino-2-methyl-5-(diphosphooxymethyl)pyrimidine + 2 H(+) = thiamine phosphate + CO2 + diphosphate. The enzyme catalyses 4-methyl-5-(2-phosphooxyethyl)-thiazole + 4-amino-2-methyl-5-(diphosphooxymethyl)pyrimidine + H(+) = thiamine phosphate + diphosphate. It participates in cofactor biosynthesis; thiamine diphosphate biosynthesis; thiamine phosphate from 4-amino-2-methyl-5-diphosphomethylpyrimidine and 4-methyl-5-(2-phosphoethyl)-thiazole: step 1/1. Condenses 4-methyl-5-(beta-hydroxyethyl)thiazole monophosphate (THZ-P) and 2-methyl-4-amino-5-hydroxymethyl pyrimidine pyrophosphate (HMP-PP) to form thiamine monophosphate (TMP). The sequence is that of Thiamine-phosphate synthase from Clostridium botulinum (strain 657 / Type Ba4).